The sequence spans 308 residues: B- and T-lymphocyte attenuator (308 aa).

A signal peptide spans 1-29; sequence MKTVPAMLVTPRSFREFFILLLGLWSILC. At 30-183 the chain is on the extracellular side; sequence KEPTKRIGEE…ERPGRTWLLY (154 aa). An Ig-like V-type domain is found at 32-134; it reads PTKRIGEECR…SANLNSEVIN (103 aa). Intrachain disulfides connect cysteine 40–cysteine 69, cysteine 64–cysteine 124, and cysteine 78–cysteine 85. Asparagine 49, asparagine 74, asparagine 81, asparagine 148, and asparagine 165 each carry an N-linked (GlcNAc...) asparagine glycan. A helical transmembrane segment spans residues 184-204; sequence ALLPLGTSLLLLACVCLLCFL. Topologically, residues 205–308 are cytoplasmic; it reads RRIQGKEKKP…TEYASICVRS (104 aa).

Interacts with tyrosine phosphatases PTPN6/SHP-1 and PTPN11/SHP-2. Interacts with TNFRSF14/HVEM (via cysteine-rich domain 1). Phosphorylated on Tyr residues by TNFRSF14 and by antigen receptors cross-linking, both inducing association with PTPN6 and PTPN11. In terms of processing, N-glycosylated.

Its subcellular location is the cell membrane. In terms of biological role, inhibitory receptor on lymphocytes that negatively regulates antigen receptor signaling via PTPN6/SHP-1 and PTPN11/SHP-2. May interact in cis (on the same cell) or in trans (on other cells) with TNFRSF14. In cis interactions, appears to play an immune regulatory role inhibiting in trans interactions in naive T cells to maintain a resting state. In trans interactions, can predominate during adaptive immune response to provide survival signals to effector T cells. The chain is B- and T-lymphocyte attenuator from Rattus norvegicus (Rat).